Consider the following 296-residue polypeptide: Uracil phosphoribosyltransferase, chloroplastic (296 aa).

The transit peptide at 1–61 (MACSIGNAFR…SSSLSRRTIR (61 aa)) directs the protein to the chloroplast. A2 is modified (N-acetylalanine). 148–151 (REPI) is a GTP binding site. Residues R158, R183, D211, 216-219 (TGGT), and D282 each bind 5-phospho-alpha-D-ribose 1-diphosphate. 281-283 (GDA) serves as a coordination point for uracil.

Belongs to the UPRTase family. The cofactor is Mg(2+).

Its subcellular location is the plastid. It is found in the chloroplast. It catalyses the reaction UMP + diphosphate = 5-phospho-alpha-D-ribose 1-diphosphate + uracil. The protein operates within pyrimidine metabolism; UMP biosynthesis via salvage pathway; UMP from uracil: step 1/1. Its activity is regulated as follows. Allosterically activated by GTP. In terms of biological role, uracil phosphoribosyltransferase (UPRT) that catalyzes the conversion of uracil and 5-phospho-alpha-D-ribose 1-diphosphate (PRPP) to UMP and diphosphate. Is probably the only functional UPRT, since the dual-domain proteins of the UKL family seem to lack this activity. This chain is Uracil phosphoribosyltransferase, chloroplastic (UPP), found in Arabidopsis thaliana (Mouse-ear cress).